A 114-amino-acid polypeptide reads, in one-letter code: Fumarate reductase subunit D (114 aa).

The next 3 membrane-spanning stretches (helical) occupy residues 27–47, 50–70, and 94–114; these read ICFP…LIPM, IIVF…TIFP, and WLFY…VIAL.

It belongs to the FrdD family. In terms of assembly, part of an enzyme complex containing four subunits: a flavoprotein (FrdA), an iron-sulfur protein (FrdB), and two hydrophobic anchor proteins (FrdC and FrdD).

The protein localises to the cell inner membrane. Anchors the catalytic components of the fumarate reductase complex to the cell membrane, binds quinones. The protein is Fumarate reductase subunit D of Haemophilus ducreyi (strain 35000HP / ATCC 700724).